A 478-amino-acid polypeptide reads, in one-letter code: Kynureninase (478 aa).

Residues Leu150, Thr151, 178–181 (FPSD), Ser234, Asp263, His266, and Tyr288 each bind pyridoxal 5'-phosphate. Lys289 carries the post-translational modification N6-(pyridoxal phosphate)lysine. The pyridoxal 5'-phosphate site is built by Trp318 and Asn346.

It belongs to the kynureninase family. Homodimer. Pyridoxal 5'-phosphate serves as cofactor.

It localises to the cytoplasm. The enzyme catalyses L-kynurenine + H2O = anthranilate + L-alanine + H(+). It carries out the reaction 3-hydroxy-L-kynurenine + H2O = 3-hydroxyanthranilate + L-alanine + H(+). Its pathway is amino-acid degradation; L-kynurenine degradation; L-alanine and anthranilate from L-kynurenine: step 1/1. It participates in cofactor biosynthesis; NAD(+) biosynthesis; quinolinate from L-kynurenine: step 2/3. In terms of biological role, catalyzes the cleavage of L-kynurenine (L-Kyn) and L-3-hydroxykynurenine (L-3OHKyn) into anthranilic acid (AA) and 3-hydroxyanthranilic acid (3-OHAA), respectively. The protein is Kynureninase of Caenorhabditis elegans.